Here is a 242-residue protein sequence, read N- to C-terminus: Probable transcriptional regulatory protein Cthe_2075 (242 aa).

The protein belongs to the TACO1 family.

The protein localises to the cytoplasm. The sequence is that of Probable transcriptional regulatory protein Cthe_2075 from Acetivibrio thermocellus (strain ATCC 27405 / DSM 1237 / JCM 9322 / NBRC 103400 / NCIMB 10682 / NRRL B-4536 / VPI 7372) (Clostridium thermocellum).